We begin with the raw amino-acid sequence, 317 residues long: Transaldolase (317 aa).

The active-site Schiff-base intermediate with substrate is Lys132.

This sequence belongs to the transaldolase family. Type 1 subfamily. As to quaternary structure, homodimer.

It is found in the cytoplasm. The enzyme catalyses D-sedoheptulose 7-phosphate + D-glyceraldehyde 3-phosphate = D-erythrose 4-phosphate + beta-D-fructose 6-phosphate. It participates in carbohydrate degradation; pentose phosphate pathway; D-glyceraldehyde 3-phosphate and beta-D-fructose 6-phosphate from D-ribose 5-phosphate and D-xylulose 5-phosphate (non-oxidative stage): step 2/3. Transaldolase is important for the balance of metabolites in the pentose-phosphate pathway. The chain is Transaldolase from Shewanella frigidimarina (strain NCIMB 400).